Consider the following 101-residue polypeptide: Small ribosomal subunit protein uS14 (101 aa).

Belongs to the universal ribosomal protein uS14 family. Part of the 30S ribosomal subunit. Contacts proteins S3 and S10.

Its function is as follows. Binds 16S rRNA, required for the assembly of 30S particles and may also be responsible for determining the conformation of the 16S rRNA at the A site. The chain is Small ribosomal subunit protein uS14 from Shewanella denitrificans (strain OS217 / ATCC BAA-1090 / DSM 15013).